The chain runs to 179 residues: Large ribosomal subunit protein uL6 (179 aa).

Belongs to the universal ribosomal protein uL6 family. In terms of assembly, part of the 50S ribosomal subunit.

In terms of biological role, this protein binds to the 23S rRNA, and is important in its secondary structure. It is located near the subunit interface in the base of the L7/L12 stalk, and near the tRNA binding site of the peptidyltransferase center. This Bacillus anthracis protein is Large ribosomal subunit protein uL6.